The following is a 413-amino-acid chain: Cell division protein FtsZ 2 (413 aa).

Residues 130–132 (GTG), Glu169, Arg173, and Asp216 each bind GTP.

This sequence belongs to the FtsZ family. Homodimer. Polymerizes to form a dynamic ring structure in a strictly GTP-dependent manner. Interacts directly with several other division proteins.

The protein resides in the cytoplasm. Its function is as follows. Essential cell division protein that forms a contractile ring structure (Z ring) at the future cell division site. The regulation of the ring assembly controls the timing and the location of cell division. One of the functions of the FtsZ ring is to recruit other cell division proteins to the septum to produce a new cell wall between the dividing cells. Binds GTP and shows GTPase activity. The protein is Cell division protein FtsZ 2 of Pyrococcus abyssi (strain GE5 / Orsay).